Reading from the N-terminus, the 658-residue chain is Exoribonuclease 2 (658 aa).

Residues 189-530 (REDLTSLYFT…VNHRLIKQVL (342 aa)) enclose the RNB domain. Positions 576-658 (AVEFDCEIAD…ETRSIVGNII (83 aa)) constitute an S1 motif domain.

Belongs to the RNR ribonuclease family. RNase II subfamily.

The protein localises to the cytoplasm. It carries out the reaction Exonucleolytic cleavage in the 3'- to 5'-direction to yield nucleoside 5'-phosphates.. Involved in mRNA degradation. Hydrolyzes single-stranded polyribonucleotides processively in the 3' to 5' direction. This Actinobacillus pleuropneumoniae serotype 3 (strain JL03) protein is Exoribonuclease 2.